Consider the following 199-residue polypeptide: Recombination protein RecR (199 aa).

The segment at 57 to 72 (CQSCRTYTEESLCPIC) adopts a C4-type zinc-finger fold. The 96-residue stretch at 81 to 176 (STICVVETPA…VISRIAHGVP (96 aa)) folds into the Toprim domain.

The protein belongs to the RecR family.

May play a role in DNA repair. It seems to be involved in an RecBC-independent recombinational process of DNA repair. It may act with RecF and RecO. This is Recombination protein RecR from Shewanella sp. (strain MR-4).